A 219-amino-acid chain; its full sequence is Sporamin A (219 aa).

The first 23 residues, 1–23 (MKALTLALFLALSLYLLPNPAHS), serve as a signal peptide directing secretion.

The protein belongs to the protease inhibitor I3 (leguminous Kunitz-type inhibitor) family. As to expression, accumulates specifically in tuberous roots and tubers upon tuberization. Sporamin accounts 60 to 80% of the total soluble protein of the organ.

It is found in the vacuole. Its function is as follows. Major tuberous root protein. In Ipomoea batatas (Sweet potato), this protein is Sporamin A (GSPO-A1).